Here is a 704-residue protein sequence, read N- to C-terminus: MNPHDLEWLNRIGERKDIMLAVLLLAVVFMMVLPLPPLVLDILIAVNMTISVVLLMIAIYINSPLQFSAFPAVLLVTTLFRLALSVSTTRMILLQADAGQIVYTFGNFVVGGNLIVGIVIFLIITIVQFLVITKGSERVAEVSARFSLDAMPGKQMSIDGDMRAGVIDVNEARERRATIEKESQMFGSMDGAMKFVKGDAIAGLIIIFVNILGGVTIGVTQKGLAAAEALQLYSILTVGDGMVSQVPALLIAITAGIIVTRVSSEDSSDLGSDIGKQVVAQPKAMLIGGVLLLLFGLIPGFPTVTFLILALLVGCGGYMLSRKQSRNDEANQDLQSILTSGSGAPAARTKAKTSGANKGRLGEQEAFAMTVPLLIDVDSSQQEALEAIALNDELVRVRRALYLDLGVPFPGIHLRFNEGMGEGEYIISLQEVPVARGELKAGYLLVRESVSQLELLGIPYEKGEHLLPDQEAFWVSVEYEERLEKSQLEFFSHSQVLTWHLSHVLREYAEDFIGIQETRYLLEQMEGGYGELIKEVQRIVPLQRMTEILQRLVGEDISIRNMRSILEAMVEWGQKEKDVVQLTEYIRSSLKRYICYKYANGNNILPAYLFDQEVEEKIRSGVRQTSAGSYLALEPAVTESLLEQVRKTIGDLSQIQSKPVLIVSMDIRRYVRKLIESEYYGLPVLSYQELTQQINIQPLGRICL.

7 consecutive transmembrane segments (helical) span residues Ile-18 to Leu-35, Ile-42 to Ile-61, Phe-108 to Ile-132, Ala-200 to Thr-220, Ile-235 to Val-259, Val-278 to Leu-297, and Val-304 to Leu-320.

The protein belongs to the FHIPEP (flagella/HR/invasion proteins export pore) family.

The protein resides in the cell inner membrane. Its function is as follows. Could be involved in the secretion of the yop virulence proteins. In Yersinia pestis, this protein is Low calcium response locus protein D (lcrD).